We begin with the raw amino-acid sequence, 213 residues long: Chloramphenicol acetyltransferase 2 (213 aa).

His-189 (proton acceptor) is an active-site residue.

It belongs to the chloramphenicol acetyltransferase family. In terms of assembly, homotrimer.

It catalyses the reaction chloramphenicol + acetyl-CoA = chloramphenicol 3-acetate + CoA. In terms of biological role, this enzyme is an effector of chloramphenicol resistance in bacteria. The sequence is that of Chloramphenicol acetyltransferase 2 (cat-IIH) from Haemophilus influenzae.